The chain runs to 237 residues: MQKLAELYRGKAKTVYTTENPDLLVLEFRNDTSALDGQRIEQFDRKGMVNNKFNHFIMAKLEEAGIPTQMESLLSDTEVLVKKLEMIPVECVIRNRAAGSLVKRLGIEEGLELNPPLFDLFLKNDAMHDPMVNESYCKTFGWATEAQLARMKELSYLANDVLSKLFDDAGLILVDFKLEFGLFNGEVVLGDEFSPDGSRLWDKKTLNKMDKDRYRQSLGGLIEAYEEVAHRIGVKLD.

Belongs to the SAICAR synthetase family.

The enzyme catalyses 5-amino-1-(5-phospho-D-ribosyl)imidazole-4-carboxylate + L-aspartate + ATP = (2S)-2-[5-amino-1-(5-phospho-beta-D-ribosyl)imidazole-4-carboxamido]succinate + ADP + phosphate + 2 H(+). The protein operates within purine metabolism; IMP biosynthesis via de novo pathway; 5-amino-1-(5-phospho-D-ribosyl)imidazole-4-carboxamide from 5-amino-1-(5-phospho-D-ribosyl)imidazole-4-carboxylate: step 1/2. This Yersinia enterocolitica serotype O:8 / biotype 1B (strain NCTC 13174 / 8081) protein is Phosphoribosylaminoimidazole-succinocarboxamide synthase.